A 526-amino-acid chain; its full sequence is AAA ATPase forming ring-shaped complexes (526 aa).

Polar residues predominate over residues 1 to 18 (MGDMASSTDPAAHNSFSD). A disordered region spans residues 1–20 (MGDMASSTDPAAHNSFSDFN). Positions 20-59 (NREEMTRLADNVRSLQRTNQDLSARNTKLAEMLKSSRDKL) form a coiled coil. Residue 257 to 262 (GCGKTL) coordinates ATP.

The protein belongs to the AAA ATPase family. As to quaternary structure, homohexamer. Assembles into a hexameric ring structure.

The chain is AAA ATPase forming ring-shaped complexes from Corynebacterium efficiens (strain DSM 44549 / YS-314 / AJ 12310 / JCM 11189 / NBRC 100395).